A 150-amino-acid chain; its full sequence is Large ribosomal subunit protein uL22c (150 aa).

Belongs to the universal ribosomal protein uL22 family. As to quaternary structure, part of the 50S ribosomal subunit.

It localises to the plastid. Functionally, this protein binds specifically to 23S rRNA. In terms of biological role, the globular domain of the protein is located near the polypeptide exit tunnel on the outside of the subunit, while an extended beta-hairpin is found that lines the wall of the exit tunnel in the center of the 70S ribosome. This chain is Large ribosomal subunit protein uL22c (rpl22), found in Orobanche minor (Small broomrape).